The chain runs to 508 residues: Protein disulfide-isomerase (508 aa).

The N-terminal stretch at 1 to 17 (MLRRALLCLAVAALVRA) is a signal peptide. The region spanning 18 to 134 (DAPEEEDHVL…IVNWLKKRTG (117 aa)) is the Thioredoxin 1 domain. Residues cysteine 53 and cysteine 56 each act as nucleophile in the active site. Residues cysteine 53 and cysteine 56 are joined by a disulfide bond. Lysine 200 bears the N6-acetyllysine mark. An N6-succinyllysine mark is found at lysine 222 and lysine 271. Residue serine 331 is modified to Phosphoserine. Residues 349–475 (GKIKPHLMSQ…FKKFLESGGQ (127 aa)) form the Thioredoxin 2 domain. Serine 357 is modified (phosphoserine; by FAM20C). Catalysis depends on nucleophile residues cysteine 397 and cysteine 400. Cysteines 397 and 400 form a disulfide. Serine 427 carries the phosphoserine modification. Positions 471–508 (ESGGQDGAGDDDDLEDLEEAEEPDMEEDDDQKAVKDEL) are disordered. Residues 478 to 500 (AGDDDDLEDLEEAEEPDMEEDDD) are compositionally biased toward acidic residues. A Prevents secretion from ER motif is present at residues 505-508 (KDEL).

The protein belongs to the protein disulfide isomerase family. Heterodimer; heterodimerizes with the protein microsomal triglyceride transfer MTTP. Homodimer. Monomers and homotetramers may also occur. Interacts with P4HA2, forming a heterotetramer consisting of 2 alpha subunits (P4HA2) and 2 beta (P4HB), where P4HB plays the role of a structural subunit; this tetramer catalyzes the formation of 4-hydroxyproline in collagen. Also constitutes the structural subunit of the microsomal triacylglycerol transfer protein MTTP in mammalian cells. Stabilizes both enzymes and retain them in the ER without contributing to the catalytic activity. Binds UBQLN1. Interacts with ERO1B. Binds to CD4, and upon HIV-1 binding to the cell membrane, is part of a P4HB/PDI-CD4-CXCR4-gp120 complex. Interacts with ILDR2. Interacts with ERN1/IRE1A (via N-terminus); the interaction is enhanced by phosphorylation of P4HB by FAM20C in response to endoplasmic reticulum stress and results in attenuation of ERN1 activity. Post-translationally, phosphorylation of Ser-357 by FAM20C is induced by endoplasmic reticulum stress and results in a functional switch from oxidoreductase to molecular chaperone. It also promotes interaction with ERN1.

It localises to the endoplasmic reticulum. The protein localises to the endoplasmic reticulum lumen. It is found in the melanosome. The protein resides in the cell membrane. The catalysed reaction is Catalyzes the rearrangement of -S-S- bonds in proteins.. Its function is as follows. This multifunctional protein catalyzes the formation, breakage and rearrangement of disulfide bonds. At the cell surface, seems to act as a reductase that cleaves disulfide bonds of proteins attached to the cell. May therefore cause structural modifications of exofacial proteins. Inside the cell, seems to form/rearrange disulfide bonds of nascent proteins. At high concentrations and following phosphorylation by FAM20C, functions as a chaperone that inhibits aggregation of misfolded proteins. At low concentrations, facilitates aggregation (anti-chaperone activity). May be involved with other chaperones in the structural modification of the TG precursor in hormone biogenesis. Also acts as a structural subunit of various enzymes such as prolyl 4-hydroxylase and microsomal triacylglycerol transfer protein MTTP. Receptor for LGALS9; the interaction retains P4HB at the cell surface of Th2 T helper cells, increasing disulfide reductase activity at the plasma membrane, altering the plasma membrane redox state and enhancing cell migration. This Homo sapiens (Human) protein is Protein disulfide-isomerase (P4HB).